Reading from the N-terminus, the 268-residue chain is Putative hydro-lyase ABAYE2440 (268 aa).

Belongs to the D-glutamate cyclase family.

The sequence is that of Putative hydro-lyase ABAYE2440 from Acinetobacter baumannii (strain AYE).